A 284-amino-acid polypeptide reads, in one-letter code: Bifunctional protein FolD (284 aa).

NADP(+)-binding positions include 165–167 (GAS), serine 190, and isoleucine 231.

The protein belongs to the tetrahydrofolate dehydrogenase/cyclohydrolase family. Homodimer.

It carries out the reaction (6R)-5,10-methylene-5,6,7,8-tetrahydrofolate + NADP(+) = (6R)-5,10-methenyltetrahydrofolate + NADPH. It catalyses the reaction (6R)-5,10-methenyltetrahydrofolate + H2O = (6R)-10-formyltetrahydrofolate + H(+). Its pathway is one-carbon metabolism; tetrahydrofolate interconversion. Functionally, catalyzes the oxidation of 5,10-methylenetetrahydrofolate to 5,10-methenyltetrahydrofolate and then the hydrolysis of 5,10-methenyltetrahydrofolate to 10-formyltetrahydrofolate. The chain is Bifunctional protein FolD from Polynucleobacter necessarius subsp. necessarius (strain STIR1).